Reading from the N-terminus, the 94-residue chain is Phosphoribosyl-ATP pyrophosphatase (94 aa).

It belongs to the PRA-PH family.

The protein localises to the cytoplasm. It carries out the reaction 1-(5-phospho-beta-D-ribosyl)-ATP + H2O = 1-(5-phospho-beta-D-ribosyl)-5'-AMP + diphosphate + H(+). The protein operates within amino-acid biosynthesis; L-histidine biosynthesis; L-histidine from 5-phospho-alpha-D-ribose 1-diphosphate: step 2/9. The sequence is that of Phosphoribosyl-ATP pyrophosphatase from Pyrobaculum calidifontis (strain DSM 21063 / JCM 11548 / VA1).